The chain runs to 299 residues: Large ribosomal subunit protein uL18 (299 aa).

The protein belongs to the universal ribosomal protein uL18 family. As to quaternary structure, component of the large ribosomal subunit (LSU). Interacts with Fmr1 to form the RNA-induced silencing complex (RISC), a ribonucleoprotein (RNP) complex involved in translation regulation, other components of the complex are Rm62, RpL11, AGO2 and Dcr-1.

The protein localises to the cytoplasm. Its subcellular location is the nucleus. Its function is as follows. Component of the ribosome, a large ribonucleoprotein complex responsible for the synthesis of proteins in the cell. The small ribosomal subunit (SSU) binds messenger RNAs (mRNAs) and translates the encoded message by selecting cognate aminoacyl-transfer RNA (tRNA) molecules. The large subunit (LSU) contains the ribosomal catalytic site termed the peptidyl transferase center (PTC), which catalyzes the formation of peptide bonds, thereby polymerizing the amino acids delivered by tRNAs into a polypeptide chain. The nascent polypeptides leave the ribosome through a tunnel in the LSU and interact with protein factors that function in enzymatic processing, targeting, and the membrane insertion of nascent chains at the exit of the ribosomal tunnel. The chain is Large ribosomal subunit protein uL18 (RpL5) from Drosophila melanogaster (Fruit fly).